Consider the following 678-residue polypeptide: ATP-dependent RNA helicase DHX58 (678 aa).

Residues 11–188 form the Helicase ATP-binding domain; sequence ILPALEGKNI…QGAIDHILQL (178 aa). 24–31 is a binding site for ATP; that stretch reads LPTGAGKT. The short motif at 131-134 is the DECH box element; it reads DECH. The 162-residue stretch at 353-514 folds into the Helicase C-terminal domain; sequence MLERILLKQF…KAVAAVQKMD (162 aa). Residues 489-546 are a coiled coil; sequence EMKRELTNEALEVLMEKAVAAVQKMDPDEFKAKIRDLQQASLVKRAARAAHREIQQGQ. In terms of domain architecture, RLR CTR spans 542-669; sequence IQQGQFLPEH…PVFDILQDCT (128 aa). Cys-556, Cys-559, Cys-612, and Cys-615 together coordinate Zn(2+). Residues 572-655 form an RNA-binding region; it reads VEGTHHVNVN…KIQAKKWSRV (84 aa).

Belongs to the helicase family. RLR subfamily. In terms of assembly, monomer in the absence of dsRNA. Homodimer in the presence of dsRNA. Interacts with RIGI (via CARD domain), MAVS/IPS1 and DDX60. Found in a complex with RIGI and IFIH1/MDA5. Interacts with ANKRD17. Directly interacts with ATG5 and ATG12, either as ATG5 and ATG12 monomers or as ATG12-ATG5 conjugates. In terms of tissue distribution, highly expressed in mammary tissues. Expressed in liver and testis. Expressed at lower level in spleen, embryo, mammary gland and breast tumors.

It localises to the cytoplasm. The enzyme catalyses ATP + H2O = ADP + phosphate + H(+). Functionally, acts as a regulator of RIGI and IFIH1/MDA5 mediated antiviral signaling. Cannot initiate antiviral signaling as it lacks the CARD domain required for activating MAVS/IPS1-dependent signaling events. Can have both negative and positive regulatory functions related to RIGI and IFIH1/MDA5 signaling and this role in regulating signaling may be complex and could probably depend on characteristics of the infecting virus or target cells, or both. Its inhibitory action on RIG-I signaling may involve the following mechanisms: competition with RIGI for binding to the viral RNA, binding to RIGI and inhibiting its dimerization and interaction with MAVS/IPS1, competing with IKBKE in its binding to MAVS/IPS1 thereby inhibiting activation of interferon regulatory factor 3 (IRF3). Its positive regulatory role may involve unwinding or stripping nucleoproteins of viral RNA thereby facilitating their recognition by RIGI and IFIH1/MDA5. Involved in the innate immune response to various RNA viruses and some DNA viruses such as poxviruses, and also to the bacterial pathogen Listeria monocytogenes. Can bind both ssRNA and dsRNA, with a higher affinity for dsRNA. Shows a preference to 5'-triphosphorylated RNA, although it can recognize RNA lacking a 5'-triphosphate. This chain is ATP-dependent RNA helicase DHX58, found in Mus musculus (Mouse).